Reading from the N-terminus, the 288-residue chain is Quinate/shikimate dehydrogenase (288 aa).

Residues lysine 71 and aspartate 107 each coordinate substrate. Residues 132–135 (AGGA), 155–158 (NRRD), lysine 205, 232–235 (CVYN), and glycine 255 each bind NAD(+).

Belongs to the shikimate dehydrogenase family. As to quaternary structure, homodimer.

It carries out the reaction L-quinate + NAD(+) = 3-dehydroquinate + NADH + H(+). The catalysed reaction is L-quinate + NADP(+) = 3-dehydroquinate + NADPH + H(+). The enzyme catalyses shikimate + NADP(+) = 3-dehydroshikimate + NADPH + H(+). It catalyses the reaction shikimate + NAD(+) = 3-dehydroshikimate + NADH + H(+). It functions in the pathway metabolic intermediate biosynthesis; chorismate biosynthesis; chorismate from D-erythrose 4-phosphate and phosphoenolpyruvate: step 4/7. Functionally, the actual biological function of YdiB remains unclear, nor is it known whether 3-dehydroshikimate or quinate represents the natural substrate. Catalyzes the reversible NAD-dependent reduction of both 3-dehydroshikimate (DHSA) and 3-dehydroquinate to yield shikimate (SA) and quinate, respectively. It can use both NAD or NADP for catalysis, however it has higher catalytic efficiency with NAD. The protein is Quinate/shikimate dehydrogenase of Escherichia coli O17:K52:H18 (strain UMN026 / ExPEC).